We begin with the raw amino-acid sequence, 37 residues long: Large ribosomal subunit protein bL36c (37 aa).

Belongs to the bacterial ribosomal protein bL36 family.

It is found in the plastid. This is Large ribosomal subunit protein bL36c from Cuscuta gronovii (Common dodder).